Consider the following 157-residue polypeptide: Endoribonuclease YbeY (157 aa).

H111, H115, and H121 together coordinate Zn(2+).

It belongs to the endoribonuclease YbeY family. The cofactor is Zn(2+).

The protein resides in the cytoplasm. Its function is as follows. Single strand-specific metallo-endoribonuclease involved in late-stage 70S ribosome quality control and in maturation of the 3' terminus of the 16S rRNA. This Pseudomonas entomophila (strain L48) protein is Endoribonuclease YbeY.